Here is a 101-residue protein sequence, read N- to C-terminus: Integration host factor subunit beta (101 aa).

Residues 57–76 (PARAGRNPRTGEHVPVDQKS) form a disordered region.

Belongs to the bacterial histone-like protein family. As to quaternary structure, heterodimer of an alpha and a beta chain.

Functionally, this protein is one of the two subunits of integration host factor, a specific DNA-binding protein that functions in genetic recombination as well as in transcriptional and translational control. In Nitrobacter winogradskyi (strain ATCC 25391 / DSM 10237 / CIP 104748 / NCIMB 11846 / Nb-255), this protein is Integration host factor subunit beta.